A 359-amino-acid polypeptide reads, in one-letter code: DNA replication and repair protein RecF (359 aa).

30–37 (GPNGSGKT) provides a ligand contact to ATP.

The protein belongs to the RecF family.

Its subcellular location is the cytoplasm. Functionally, the RecF protein is involved in DNA metabolism; it is required for DNA replication and normal SOS inducibility. RecF binds preferentially to single-stranded, linear DNA. It also seems to bind ATP. The protein is DNA replication and repair protein RecF of Vibrio vulnificus (strain YJ016).